We begin with the raw amino-acid sequence, 129 residues long: Prefoldin subunit 4 (129 aa).

M1 is subject to N-acetylmethionine.

It belongs to the prefoldin subunit beta family. In terms of assembly, heterohexamer of two PFD-alpha type and four PFD-beta type subunits.

Its function is as follows. Binds specifically to cytosolic chaperonin (c-CPN) and transfers target proteins to it. Binds to nascent polypeptide chain and promotes folding in an environment in which there are many competing pathways for nonnative proteins. In Saccharomyces cerevisiae (strain ATCC 204508 / S288c) (Baker's yeast), this protein is Prefoldin subunit 4 (GIM3).